Reading from the N-terminus, the 376-residue chain is Glutamate 5-kinase (376 aa).

Residue lysine 10 participates in ATP binding. Residues serine 50, aspartate 137, and asparagine 149 each contribute to the substrate site. ATP is bound at residue 169-170; it reads TD. The 79-residue stretch at 275 to 353 folds into the PUA domain; the sequence is RGRLVLDAGA…AEIAGVLGFM (79 aa).

It belongs to the glutamate 5-kinase family.

It localises to the cytoplasm. It carries out the reaction L-glutamate + ATP = L-glutamyl 5-phosphate + ADP. Its pathway is amino-acid biosynthesis; L-proline biosynthesis; L-glutamate 5-semialdehyde from L-glutamate: step 1/2. Its function is as follows. Catalyzes the transfer of a phosphate group to glutamate to form L-glutamate 5-phosphate. In Alcanivorax borkumensis (strain ATCC 700651 / DSM 11573 / NCIMB 13689 / SK2), this protein is Glutamate 5-kinase.